The primary structure comprises 563 residues: TSET complex member tstC (563 aa).

Disordered regions lie at residues 146–170, 192–213, 235–298, 376–395, and 428–563; these read SPHQ…SFIT, NSLS…NNDS, VLNS…NYNN, HPNA…NEFK, and GSAS…FLNF. Residues 379 to 395 show a composition bias toward basic and acidic residues; the sequence is AGKEAKEKEKEKENEFK. The segment covering 428–459 has biased composition (low complexity); sequence GSASSKSSPSTSPLSSSYNPSSPETSENSFSA. Over residues 460-473 the composition is skewed to polar residues; sequence TPISDSNSLKNSID. Composition is skewed to low complexity over residues 474-487 and 507-543; these read NNNN…NNNN and NNSK…SSAA. Polar residues predominate over residues 552–563; sequence NSAKTKMNFLNF.

As to quaternary structure, component of the TSET complex, a heterohexamer composed of tstA, tstB, tstC, tstD, tstE and tstF, which may act in plasma membrane turnover. tstA, tstB, tstC and tstD are likely to be the core complex members with tstE and tstF acting as associated scaffold proteins.

This is TSET complex member tstC from Dictyostelium discoideum (Social amoeba).